The sequence spans 347 residues: Gamma-glutamyl hydrolase B (347 aa).

The first 22 residues, 1–22 (MIKLFSLFIYLYLISNLKLINT), serve as a signal peptide directing secretion. The region spanning 23 to 314 (INNTPVIGIL…THVEQIYIFN (292 aa)) is the Gamma-glutamyl hydrolase domain. The active-site Nucleophile is Cys-128. N-linked (GlcNAc...) asparagine glycosylation is found at Asn-152, Asn-158, and Asn-201. Residue His-240 is the Proton donor of the active site. 3 N-linked (GlcNAc...) asparagine glycosylation sites follow: Asn-273, Asn-314, and Asn-318.

It belongs to the peptidase C26 family.

Its subcellular location is the secreted. It localises to the extracellular space. It carries out the reaction (6S)-5,6,7,8-tetrahydrofolyl-(gamma-L-Glu)(n) + (n-1) H2O = (6S)-5,6,7,8-tetrahydrofolate + (n-1) L-glutamate. This Dictyostelium discoideum (Social amoeba) protein is Gamma-glutamyl hydrolase B (gghB).